Reading from the N-terminus, the 407-residue chain is Argininosuccinate synthase (407 aa).

ATP is bound by residues 16 to 24 and Ala44; that span reads AYSGGLDTS. L-citrulline-binding residues include Tyr96 and Ser101. Gly126 provides a ligand contact to ATP. Positions 128, 132, and 133 each coordinate L-aspartate. Asn132 contacts L-citrulline. L-citrulline-binding residues include Arg136, Ser185, Ser194, Glu270, and Tyr282.

The protein belongs to the argininosuccinate synthase family. Type 1 subfamily. Homotetramer.

The protein localises to the cytoplasm. It catalyses the reaction L-citrulline + L-aspartate + ATP = 2-(N(omega)-L-arginino)succinate + AMP + diphosphate + H(+). It functions in the pathway amino-acid biosynthesis; L-arginine biosynthesis; L-arginine from L-ornithine and carbamoyl phosphate: step 2/3. The sequence is that of Argininosuccinate synthase from Shewanella frigidimarina (strain NCIMB 400).